A 613-amino-acid chain; its full sequence is pH-response transcription factor pacC/RIM101 (613 aa).

The interval Met1–Asp61 is disordered. Over residues Gln11–Ser60 the composition is skewed to low complexity. 3 consecutive C2H2-type zinc fingers follow at residues Leu64 to His89, Leu100 to His124, and His130 to His152. The span at Lys146 to Val157 shows a compositional bias: basic and acidic residues. 4 disordered regions span residues Lys146–Thr186, Asn371–Gly391, Ala406–Glu535, and Glu565–Ala613. Residues Pro417–Ser441 are compositionally biased toward low complexity. Polar residues-rich tracts occupy residues Arg442–Ala460 and Ser506–Ala517. Positions Tyr451–Leu454 match the YPX[LI] motif 1 motif. A YPX[LI] motif 2 motif is present at residues Tyr605–Leu608.

Belongs to the pacC/RIM101 family. Binds to DNA. Activated by C-terminal proteolytic cleavage by signaling protease (probably palB/RIM13) at neutral to alkaline ambient pH.

The protein resides in the cytoplasm. Its subcellular location is the nucleus. Transcription factor that mediates regulation of both acid- and alkaline-expressed genes in response to ambient pH. At alkaline ambient pH, activates transcription of alkaline-expressed genes (including PAC1 itself) and represses transcription of acid-expressed genes. In Gibberella moniliformis (Maize ear and stalk rot fungus), this protein is pH-response transcription factor pacC/RIM101 (PAC1).